Consider the following 338-residue polypeptide: RNA 3'-terminal phosphate cyclase (338 aa).

ATP is bound by residues Q103 and 283-287 (YLADQ). Catalysis depends on H308, which acts as the Tele-AMP-histidine intermediate.

The protein belongs to the RNA 3'-terminal cyclase family. Type 1 subfamily.

Its subcellular location is the cytoplasm. The enzyme catalyses a 3'-end 3'-phospho-ribonucleotide-RNA + ATP = a 3'-end 2',3'-cyclophospho-ribonucleotide-RNA + AMP + diphosphate. Catalyzes the conversion of 3'-phosphate to a 2',3'-cyclic phosphodiester at the end of RNA. The mechanism of action of the enzyme occurs in 3 steps: (A) adenylation of the enzyme by ATP; (B) transfer of adenylate to an RNA-N3'P to produce RNA-N3'PP5'A; (C) and attack of the adjacent 2'-hydroxyl on the 3'-phosphorus in the diester linkage to produce the cyclic end product. The biological role of this enzyme is unknown but it is likely to function in some aspects of cellular RNA processing. This is RNA 3'-terminal phosphate cyclase from Escherichia coli O17:K52:H18 (strain UMN026 / ExPEC).